The sequence spans 105 residues: BLOC-1-related complex subunit 7 (105 aa).

It belongs to the BORCS7 family. In terms of assembly, component of the BLOC-one-related complex (BORC) which is composed of BLOC1S1, BLOC1S2, BORCS5, BORCS6, BORCS7, BORCS8, KXD1 and SNAPIN.

It localises to the lysosome membrane. In terms of biological role, as part of the BORC complex may play a role in lysosomes movement and localization at the cell periphery. Associated with the cytosolic face of lysosomes, the BORC complex may recruit ARL8B and couple lysosomes to microtubule plus-end-directed kinesin motor. The chain is BLOC-1-related complex subunit 7 from Mus musculus (Mouse).